The chain runs to 469 residues: Actin-related protein 4 (469 aa).

The segment at Pro104–Thr136 is disordered. Residues Asp119–Thr136 are compositionally biased toward acidic residues.

The protein belongs to the actin family. ARP4 subfamily. As to quaternary structure, component of the NuA4 histone acetyltransferase complex, of the INO80 chromatin remodeling complex, and of the SWR1 chromatin remodeling complex.

Its subcellular location is the nucleus. Chromatin interaction component of the NuA4 histone acetyltransferase complex which is involved in transcriptional activation of selected genes principally by acetylation of nucleosomal histone H4 and H2A. The NuA4 complex is also involved in DNA repair. Is required for NuA4 complex integrity. Component of the SWR1 complex which mediates the ATP-dependent exchange of histone H2A for the H2A variant H2A.Z leading to transcriptional regulation of selected genes by chromatin remodeling. Component of the INO80 complex which remodels chromatin by shifting nucleosomes and is involved in DNA repair. The polypeptide is Actin-related protein 4 (arp-4) (Neurospora crassa (strain ATCC 24698 / 74-OR23-1A / CBS 708.71 / DSM 1257 / FGSC 987)).